The chain runs to 167 residues: NADH-ubiquinone oxidoreductase chain 6 (167 aa).

Helical transmembrane passes span 21-41, 45-65, 78-98, and 132-152; these read SPYY…LLLL, IIFP…VVFI, PINL…ITMI, and SMFI…LEVV.

The protein belongs to the complex I subunit 6 family.

It is found in the mitochondrion membrane. It carries out the reaction a ubiquinone + NADH + 5 H(+)(in) = a ubiquinol + NAD(+) + 4 H(+)(out). Its function is as follows. Core subunit of the mitochondrial membrane respiratory chain NADH dehydrogenase (Complex I) that is believed to belong to the minimal assembly required for catalysis. Complex I functions in the transfer of electrons from NADH to the respiratory chain. The immediate electron acceptor for the enzyme is believed to be ubiquinone. This is NADH-ubiquinone oxidoreductase chain 6 (ND6) from Branchiostoma floridae (Florida lancelet).